The following is a 288-amino-acid chain: Probable prolyl 4-hydroxylase 6 (288 aa).

Residues 1 to 4 (MDSQ) are Cytoplasmic-facing. Residues 5–27 (YFLAFSLSLLLIFSQISSFSFSV) traverse the membrane as a helical; Signal-anchor for type II membrane protein segment. The Lumenal portion of the chain corresponds to 28–288 (DPTRITQLSW…GFCRKSCKAC (261 aa)). The 123-residue stretch at 116–238 (NGEALQILHY…KWSATRWIHV (123 aa)) folds into the Fe2OG dioxygenase domain. Positions 134 and 136 each coordinate Fe cation. Residues Asn160 and Asn210 are each glycosylated (N-linked (GlcNAc...) asparagine). His219 is a binding site for Fe cation. Lys229 serves as a coordination point for 2-oxoglutarate. The 41-residue stretch at 248 to 288 (CVDDHESCQEWADAGECEKNPMYMVGSETSLGFCRKSCKAC) folds into the ShKT domain. Disulfide bonds link Cys248-Cys288, Cys255-Cys281, and Cys264-Cys285.

Belongs to the P4HA family. The cofactor is Fe(2+). It depends on L-ascorbate as a cofactor.

It is found in the endoplasmic reticulum membrane. It carries out the reaction L-prolyl-[collagen] + 2-oxoglutarate + O2 = trans-4-hydroxy-L-prolyl-[collagen] + succinate + CO2. In terms of biological role, catalyzes the post-translational formation of 4-hydroxyproline in -Xaa-Pro-Gly- sequences in proline-rich peptide sequences of plant glycoproteins and other proteins. Hydroxyprolines are important constituent of many plant cell wall glycoproteins such as extensins, hydroxyproline-rich glycoproteins, lectins and arabinogalactan proteins. The protein is Probable prolyl 4-hydroxylase 6 of Arabidopsis thaliana (Mouse-ear cress).